A 418-amino-acid polypeptide reads, in one-letter code: Deubiquitinase and deneddylase Dub1 (418 aa).

Residues 1–10 (MLSPTNSISK) show a composition bias toward polar residues. A disordered region spans residues 1-23 (MLSPTNSISKTVPAPPQDSSKPV). Residues 40–60 (TALAVLLVVVTLGLILLFYSF) form a helical membrane-spanning segment. Residues 75–145 (STKEHPTISI…LPPKAPKPVK (71 aa)) are disordered. The span at 86–141 (EPLPSPPLAVPRPSTPPPPVISRPSTPPAPTPAISPPSTPSAPKPSTPPPLPPKAP) shows a compositional bias: pro residues. Active-site residues include H288, D305, and C358.

It belongs to the peptidase C48 family.

The protein localises to the secreted. The protein resides in the host cell. It localises to the membrane. Its function is as follows. Effector proteins function to alter host cell physiology and promote bacterial survival in host tissues. This protease possesses deubiquitinating and deneddylating activities. The polypeptide is Deubiquitinase and deneddylase Dub1 (cdu1) (Chlamydia trachomatis serovar A (strain ATCC VR-571B / DSM 19440 / HAR-13)).